The following is a 208-amino-acid chain: Small ribosomal subunit protein uS4 (208 aa).

The S4 RNA-binding domain occupies 99–165; that stretch reads RRLDNVVFQL…PRLKEILSSL (67 aa).

The protein belongs to the universal ribosomal protein uS4 family. In terms of assembly, part of the 30S ribosomal subunit. Contacts protein S5. The interaction surface between S4 and S5 is involved in control of translational fidelity.

In terms of biological role, one of the primary rRNA binding proteins, it binds directly to 16S rRNA where it nucleates assembly of the body of the 30S subunit. With S5 and S12 plays an important role in translational accuracy. The protein is Small ribosomal subunit protein uS4 of Desulfitobacterium hafniense (strain Y51).